Consider the following 165-residue polypeptide: Glucosamine 6-phosphate N-acetyltransferase (165 aa).

Positions 22–165 constitute an N-acetyltransferase domain; that stretch reads FKVRPLAKDD…DDCNFMTQRF (144 aa). Substrate is bound by residues threonine 44, 92 to 95, and 104 to 106; these read KFIH and EDV. 114 to 119 contributes to the acetyl-CoA binding site; it reads RQKLGA. Substrate is bound by residues 135-136 and arginine 164; that span reads YK.

It belongs to the acetyltransferase family. GNA1 subfamily.

It carries out the reaction D-glucosamine 6-phosphate + acetyl-CoA = N-acetyl-D-glucosamine 6-phosphate + CoA + H(+). Its pathway is nucleotide-sugar biosynthesis; UDP-N-acetyl-alpha-D-glucosamine biosynthesis; N-acetyl-alpha-D-glucosamine 1-phosphate from alpha-D-glucosamine 6-phosphate (route I): step 1/2. This chain is Glucosamine 6-phosphate N-acetyltransferase (gna-1), found in Caenorhabditis elegans.